A 455-amino-acid polypeptide reads, in one-letter code: Zinc finger SWIM domain-containing protein 1 (455 aa).

The tract at residues 264-288 (ASLSLAETPQDSHTPSEASAENPNT) is disordered. An SWIM-type zinc finger spans residues 333–375 (MSIQILEDTHTVQPQPPASCSCYFNQAFHLPCRHILAMLSARQ).

In Mus musculus (Mouse), this protein is Zinc finger SWIM domain-containing protein 1 (Zswim1).